Here is a 359-residue protein sequence, read N- to C-terminus: Type-1 angiotensin II receptor B (359 aa).

Topologically, residues 1–25 (MTLNSSTEDGIKRIQDDCPKAGRHN) are extracellular. A glycan (N-linked (GlcNAc...) asparagine) is linked at Asn-4. Gln-15 and Asp-17 together coordinate angiotensin II. 2 disulfide bridges follow: Cys-18/Cys-274 and Cys-101/Cys-180. A helical membrane pass occupies residues 26-55 (YIFVMIPTLYSIIFVVGIFGNSLVVIVIYF). Over 56–61 (YMKLKT) the chain is Cytoplasmic. A helical membrane pass occupies residues 62 to 89 (VASVFLLNLALADLCFLLTLPLWAVYTA). Residues 90–98 (MEYRWPFGN) lie on the Extracellular side of the membrane. A helical transmembrane segment spans residues 99-125 (HLCKIASASVSFNLYASVFLLTCLSID). Over 126–141 (RYLAIVHPMKSRLRRT) the chain is Cytoplasmic. Residues 142 to 165 (MLVAKVTCIIIWLMAGLASLPAVI) traverse the membrane as a helical segment. Residues 166 to 190 (YRNVYFIENTNITVCAFHYESQNST) are Extracellular-facing. Residue Arg-167 coordinates angiotensin II. The N-linked (GlcNAc...) asparagine glycan is linked to Asn-176. The angiotensin II site is built by Phe-182, His-183, and Tyr-184. Asn-188 carries an N-linked (GlcNAc...) asparagine glycan. A helical transmembrane segment spans residues 191–216 (LPIGLGLTKNILGFVFPFLIILTSYT). Residue Lys-199 participates in angiotensin II binding. At 217–239 (LIWKALKKAYKIQKNTPRNDDIF) the chain is on the cytoplasmic side. Residues 240–268 (RIIMAIVLFFFFSWVPHQIFTFLDVLIQL) traverse the membrane as a helical segment. Residues 269–278 (GIIRDCEIAD) lie on the Extracellular side of the membrane. The chain crosses the membrane as a helical span at residues 279-304 (IVDTAMPITICIAYFNNCLNPLFYGF). Residues 305 to 359 (LGKKFKKYFLQLLKYIPPTAKSHAGLSTKMSTLSYRPSDNMSSSAKKSASFFEVE) are Cytoplasmic-facing. The disordered stretch occupies residues 339 to 359 (YRPSDNMSSSAKKSASFFEVE). A compositionally biased stretch (low complexity) spans 346–359 (SSSAKKSASFFEVE).

The protein belongs to the G-protein coupled receptor 1 family. In terms of assembly, interacts with MAS1. Interacts with ARRB1. Interacts with FLNA (via filamin repeat 21); increases PKA-mediated phosphorylation of FLNA. Post-translationally, C-terminal Ser or Thr residues may be phosphorylated. As to expression, is expressed in the liver, kidney, aorta, lung, uterus, ovary, spleen, heart, and vascular smooth muscle cell. Expressed most abundantly in the adrenal gland.

Its subcellular location is the cell membrane. Functionally, receptor for angiotensin II, a vasoconstricting peptide, which acts as a key regulator of blood pressure and sodium retention by the kidney. The activated receptor in turn couples to G-alpha proteins G(q) (GNAQ, GNA11, GNA14 or GNA15) and thus activates phospholipase C and increases the cytosolic Ca(2+) concentrations, which in turn triggers cellular responses such as stimulation of protein kinase C. The sequence is that of Type-1 angiotensin II receptor B (Agtr1b) from Rattus norvegicus (Rat).